A 177-amino-acid polypeptide reads, in one-letter code: MSRVGKAPIALPKGAEVNVAAGVLSVKGPLGTLSQPIHSLVKVNVENDTLTFSPADESREANALQGTMRALVANMVKGVTTGFERKLNLVGVGYRAQLQGAALKLQLGFSHDVIHEMPEGVKAETPTQTEIIIKGADKQKVGQVAAEVRAYRPPEPYKGKGVRYSDERVILKETKKK.

The protein belongs to the universal ribosomal protein uL6 family. Part of the 50S ribosomal subunit.

Its function is as follows. This protein binds to the 23S rRNA, and is important in its secondary structure. It is located near the subunit interface in the base of the L7/L12 stalk, and near the tRNA binding site of the peptidyltransferase center. This is Large ribosomal subunit protein uL6 from Cupriavidus necator (strain ATCC 17699 / DSM 428 / KCTC 22496 / NCIMB 10442 / H16 / Stanier 337) (Ralstonia eutropha).